The chain runs to 395 residues: Probable sugar efflux transporter (395 aa).

12 consecutive transmembrane segments (helical) span residues 13–33, 48–68, 82–102, 107–127, 134–154, 168–188, 207–227, 244–264, 272–292, 297–317, 331–351, and 363–383; these read VVSLSLAAFIFNTAEFAPVAL, VGLIITIYAWVVGLMSLPCML, IFILFAISNVLSGLAWNYWVL, IGVALSHAVFWSITASLVVRL, AQALSLLATGTALALVLGLPL, FVLIGLIAAVIMVGLMKLLPV, PALLCVYGLTVMIVTAHFTAY, FTTILLLIFGGAGIIGSMLFS, AGFLIVSFAFLAVCLLLLLPL, WSLSTLCIVWGIAIMALSLGM, VAMALYSGIYNIGIGGGALLG, and IGYMGAAMAILATVCCIFTFV.

This sequence belongs to the major facilitator superfamily. SotB (TC 2.A.1.2) family.

The protein localises to the cell inner membrane. Its function is as follows. Involved in the efflux of sugars. The physiological role may be the reduction of the intracellular concentration of toxic sugars or sugar metabolites. This Pectobacterium atrosepticum (strain SCRI 1043 / ATCC BAA-672) (Erwinia carotovora subsp. atroseptica) protein is Probable sugar efflux transporter.